A 300-amino-acid polypeptide reads, in one-letter code: Arrestin domain-containing protein 4 (300 aa).

2 short sequence motifs (PPxY motif) span residues 231-234 and 276-279; these read PPNY and PPLY.

The protein belongs to the arrestin family. As to quaternary structure, interacts with ADRB2. Interacts (via PPxY motifs) with ITCH, NEDD4L and WWP2. Interacts with AVPR2. Identified in a complex containing at least ARRDC4, AVPR2 and HGS. Interacts with SLC11A2; controls the incorporation of SLC11A2 into extracellular vesicles through an ubiquitination-dependent mechanism. Interacts with TRIM65.

Its subcellular location is the early endosome. It is found in the cell membrane. It localises to the cytoplasmic vesicle. Its function is as follows. Functions as an adapter recruiting ubiquitin-protein ligases to their specific substrates. Plays a role in endocytosis of activated G protein-coupled receptors (GPCRs) Through an ubiquitination-dependent mechanism also plays a role in the incorporation of SLC11A2 into extracellular vesicles. May play a role in glucose uptake. Participates in innate immune response by promoting IFIH1/MDA5 activation through interaction with TRIM65. The protein is Arrestin domain-containing protein 4 (Arrdc4) of Rattus norvegicus (Rat).